The primary structure comprises 29 residues: M-poneritoxin-Ng3d (29 aa).

In terms of tissue distribution, expressed by the venom gland.

Its subcellular location is the secreted. In terms of biological role, has activity against some Gram-positive bacteria and S.cerevisiae. Has a non-hemolytic activity. The chain is M-poneritoxin-Ng3d from Neoponera goeldii (Ponerine ant).